The chain runs to 497 residues: Probable cytosol aminopeptidase (497 aa).

The Mn(2+) site is built by lysine 268 and aspartate 273. Lysine 280 is an active-site residue. The Mn(2+) site is built by aspartate 291, aspartate 350, and glutamate 352. Residue arginine 354 is part of the active site.

It belongs to the peptidase M17 family. Mn(2+) is required as a cofactor.

It is found in the cytoplasm. It catalyses the reaction Release of an N-terminal amino acid, Xaa-|-Yaa-, in which Xaa is preferably Leu, but may be other amino acids including Pro although not Arg or Lys, and Yaa may be Pro. Amino acid amides and methyl esters are also readily hydrolyzed, but rates on arylamides are exceedingly low.. The catalysed reaction is Release of an N-terminal amino acid, preferentially leucine, but not glutamic or aspartic acids.. Presumably involved in the processing and regular turnover of intracellular proteins. Catalyzes the removal of unsubstituted N-terminal amino acids from various peptides. The sequence is that of Probable cytosol aminopeptidase from Alkalilimnicola ehrlichii (strain ATCC BAA-1101 / DSM 17681 / MLHE-1).